Consider the following 582-residue polypeptide: Glutamine--tRNA ligase (582 aa).

Residues P50–H60 carry the 'HIGH' region motif. ATP-binding positions include E51 to N53 and H57 to S63. L-glutamine is bound by residues D83 and Y235. ATP-binding positions include T254 and R289–L290. The 'KMSKS' region motif lies at I296–R300.

This sequence belongs to the class-I aminoacyl-tRNA synthetase family. As to quaternary structure, monomer.

The protein localises to the cytoplasm. The catalysed reaction is tRNA(Gln) + L-glutamine + ATP = L-glutaminyl-tRNA(Gln) + AMP + diphosphate. This is Glutamine--tRNA ligase from Cupriavidus metallidurans (strain ATCC 43123 / DSM 2839 / NBRC 102507 / CH34) (Ralstonia metallidurans).